Here is a 111-residue protein sequence, read N- to C-terminus: ATP-dependent Clp protease adapter protein ClpS (111 aa).

Belongs to the ClpS family. As to quaternary structure, binds to the N-terminal domain of the chaperone ClpA.

In terms of biological role, involved in the modulation of the specificity of the ClpAP-mediated ATP-dependent protein degradation. The chain is ATP-dependent Clp protease adapter protein ClpS from Corynebacterium aurimucosum (strain ATCC 700975 / DSM 44827 / CIP 107346 / CN-1) (Corynebacterium nigricans).